The chain runs to 427 residues: MAYKEYRDKVLHFIEEHEKWRSHTINLIASENITSPSVNRAVASGFMHKYAEGWPRQRYYQGCKYVDEVELIGVELFTKLFKSDYADLRPISGTNANQAVFFGLGQPGDKVIVLHTSHGGHISHMPFGAAGMRGLEVHTWPFDNESFNIDVDKAEKMIRELEPKIVVFGGSLFPFPHPVKELAPVAKEVGAFVVYDAAHVLGLIAGGEFQDPLREGADIMTASTHKTFPGPQGGVILYKKFADDETIAKLQWAIFPGVLSNHHLHHMAGKVITAAEMLEYGEAYAKQIVKNAKALAEALAEEGFKVIGEDQGYTKSHQVIVDVSDLHPAGGGWAAPLLEEAGIILNKNLLPWDPLEKVNEPSGLRIGVQEMTRVGMMEDEMKEIAHFMKRVLLDKEDPKKVRKDVYYFRLEYQKVYYSFDYGLPMKE.

120-122 (GHI) is a binding site for (6S)-5,6,7,8-tetrahydrofolate. Lys-226 is subject to N6-(pyridoxal phosphate)lysine.

The protein belongs to the SHMT family. As to quaternary structure, homodimer. Pyridoxal 5'-phosphate is required as a cofactor.

Its subcellular location is the cytoplasm. It functions in the pathway amino-acid biosynthesis; glycine biosynthesis; glycine from L-serine: step 1/1. Its function is as follows. Catalyzes the reversible interconversion of serine and glycine with a modified folate serving as the one-carbon carrier. Also exhibits a pteridine-independent aldolase activity toward beta-hydroxyamino acids, producing glycine and aldehydes, via a retro-aldol mechanism. This Pyrococcus abyssi (strain GE5 / Orsay) protein is Serine hydroxymethyltransferase.